Consider the following 502-residue polypeptide: ATP synthase subunit alpha (502 aa).

Position 169–176 (169–176 (GDRQTGKT)) interacts with ATP.

The protein belongs to the ATPase alpha/beta chains family. In terms of assembly, F-type ATPases have 2 components, CF(1) - the catalytic core - and CF(0) - the membrane proton channel. CF(1) has five subunits: alpha(3), beta(3), gamma(1), delta(1), epsilon(1). CF(0) has three main subunits: a(1), b(2) and c(9-12). The alpha and beta chains form an alternating ring which encloses part of the gamma chain. CF(1) is attached to CF(0) by a central stalk formed by the gamma and epsilon chains, while a peripheral stalk is formed by the delta and b chains.

The protein localises to the cell membrane. It catalyses the reaction ATP + H2O + 4 H(+)(in) = ADP + phosphate + 5 H(+)(out). Produces ATP from ADP in the presence of a proton gradient across the membrane. The alpha chain is a regulatory subunit. In Staphylococcus aureus (strain Mu3 / ATCC 700698), this protein is ATP synthase subunit alpha.